A 176-amino-acid chain; its full sequence is MGYPKEGETIQIHSYKHNGLLHRIWNETTILKSTELCIIGANDRTMVTESDGRTWVTREPAICYFHARQWFNVIGMLRDDGVHYYCNISSPFAYDGEAIKYIDYDLDVKVFPDMTYNILDEDEYDDHRKSMNYPKEIDSILKEYLNTLLHWIHQRKGPFAPEFVDMWYERYLRYTK.

Arg-23 functions as the Proton donor in the catalytic mechanism. Positions 87, 103, 105, 107, 120, and 123 each coordinate Mg(2+).

Belongs to the Ntdp family. The cofactor is Mg(2+).

It carries out the reaction a ribonucleoside 5'-triphosphate + H2O = a ribonucleoside 5'-diphosphate + phosphate + H(+). The catalysed reaction is a ribonucleoside 5'-diphosphate + H2O = a ribonucleoside 5'-phosphate + phosphate + H(+). Its function is as follows. Has nucleoside phosphatase activity towards nucleoside triphosphates and nucleoside diphosphates. The sequence is that of Nucleoside triphosphate/diphosphate phosphatase from Bacillus velezensis (strain DSM 23117 / BGSC 10A6 / LMG 26770 / FZB42) (Bacillus amyloliquefaciens subsp. plantarum).